A 406-amino-acid chain; its full sequence is Arginine deiminase (406 aa).

The Amidino-cysteine intermediate role is filled by Cys396.

This sequence belongs to the arginine deiminase family.

Its subcellular location is the cytoplasm. It carries out the reaction L-arginine + H2O = L-citrulline + NH4(+). The protein operates within amino-acid degradation; L-arginine degradation via ADI pathway; carbamoyl phosphate from L-arginine: step 1/2. This chain is Arginine deiminase, found in Vibrio vulnificus (strain YJ016).